A 96-amino-acid polypeptide reads, in one-letter code: Translation initiation factor 1A 1 (96 aa).

Residues 8–82 (GSHDLRMPDD…EKGDITWRYE (75 aa)) form the S1-like domain.

This sequence belongs to the eIF-1A family.

Seems to be required for maximal rate of protein biosynthesis. Enhances ribosome dissociation into subunits and stabilizes the binding of the initiator Met-tRNA(I) to 40 S ribosomal subunits. This is Translation initiation factor 1A 1 from Haloquadratum walsbyi (strain DSM 16790 / HBSQ001).